The sequence spans 1193 residues: MNINDNLSINSPVDNKNVVVVRARKTDTVFKAFKVAPNIWVAPERYYGESLSIDEEYKVDGGIYDSNFLSQDSEKDKFLQAIITLLKRINSTNAGEKLLSLISTAIPFPYGYIGGGYYAPNMITFGSAPKSNKKLNSLISSTIPFPYAGYRETNYLSSEDNKSFYASNIVIFGPGANIVENNTVFYKKEDAENGMGTMTEIWFQPFLTYKYDEFYIDPAIELIKCLIKSLYFLYGIKPSDDLVIPYRLRSELENIEYSQLNIVDLLVSGGIDPKFINTDPYWFTDNYFSNAKKVFEDHRNIYETEIEGNNAIGNDIKLRLKQKFRININDIWELNLNYFSKEFSIMMPDRFNNALKHFYRKQYYKIDYPENYSINGFVNGQINAQLSLSDRNQDIINKPEEIINLLNGNNVSLMRSNIYGDGLKSTVDDFYSNYKIPYNRAYEYHFNNSNDSSLDNVNIGVIDNIPEIIDVNPYKENCDKFSPVQKITSTREINTNIPWPINYLQAQNTNNEKFSLSSDFVEVVSSKDKSLVYSFLSNVMFYLDSIKDNSPIDTDKKYYLWLREIFRNYSFDITATQEINTNCGINKVVTWFGKALNILNTSDSFVEEFQNLGAISLINKKENLSMPIIESYEIPNDMLGLPLNDLNEKLFNIYSKNTAYFKKIYYNFLDQWWTQYYSQYFDLICMAKRSVLAQETLIKRIIQKKLSYLIGNSNISSDNLALMNLTTTNTLRDISNESQIAMNNVDSFLNNAAICVFESNIYPKFISFMEQCINNINIKTKEFIQKCTNINEDEKLQLINQNVFNSLDFEFLNIQNMKSLFSSETALLIKEETWPYELVLYAFKEPGNNVIGDASGKNTSIEYSKDIGLVYGINSDALYLNGSNQSISFSNDFFENGLTNSFSIYFWLRNLGKDTIKSKLIGSKEDNCGWEIYFQDTGLVFNMIDSNGNEKNIYLSDVSNNSWHYITISVDRLKEQLLIFIDDNLVANESIKEILNIYSSNIISLLSENNPSYIEGLTILNKPTTSQEVLSNYFEVLNNSYIRDSNEERLEYNKTYQLYNYVFSDKPICEVKQNNNIYLTINNTNNLNLQASKFKLLSINPNKQYVQKLDEVIISVLDNMEKYIDISEDNRLQLIDNKNNAKKMIISNDIFISNCLTLSYNGKYICLSMKDENHNWMICNNDMSKYLYLWSFK.

The tract at residues 1–408 (MNINDNLSIN…PEEIINLLNG (408 aa)) is light chain nLC. The interval 409–829 (NNVSLMRSNI…LFSSETALLI (421 aa)) is N-heavy chain nHN. C583 and C755 form a disulfide bridge. Residues 830–1193 (KEETWPYELV…SKYLYLWSFK (364 aa)) form a C-heavy chain nHC; required for protection of BoNT/A at pH 2.0 region.

This sequence belongs to the botulism non-toxic nonhemagglutinin family. Forms a highly interlocked heterodimer with botulinum neurotoxin type A at pH 6.0 but not at pH 7.5, called the minimally functional progenitor toxin complex (M-PTC) (BoNT/A, botA). Post-translationally, the 133-Lys-|-Lys-134 bond is cleaved during long-term storage; the cleavage site is masked in the M-PTC complex.

Functionally, assembles with botulinum neurotoxin type A (BoNT/A) and protects it against pH-mediated inactivation or protease activity at pH 2.6 (the pH of the animal gastrointestinal tract) but not at pH 6.0. Necessary for neurotoxicity. This Clostridium botulinum protein is Non-toxic nonhemagglutinin type A.